Consider the following 710-residue polypeptide: Pentatricopeptide repeat-containing protein At3g14330 (710 aa).

PPR repeat units lie at residues 166-196, 200-234, 235-269, 270-304, 305-331, 336-370, 371-401, 402-436, 437-467, and 473-503; these read NPKLLSKLITLFSVCRRLDLARKIFDDVTDS, TEKVWAAMAIGYSRNGSPRDALIVYVDMLCSFIEP, GNFSISVALKACVDLKDLRVGRGIHAQIVKRKEKV, DQVVYNVLLKLYMESGLFDDARKVFDGMSERNVVT, WNSLISVLSKKVRVHEMFNLFRKMQEE, SWATLTTILPACSRVAALLTGKEIHAQILKSKEKP, DVPLLNSLMDMYGKCGEVEYSRRVFDVMLTK, DLASWNIMLNCYAINGNIEEVINLFEWMIESGVAP, DGITFVALLSGCSDTGLTEYGLSLFERMKTE, and ALEHYACLVDILGRAGKIKEAVKVIETMPFK. The tract at residues 508-583 is type E motif; sequence IWGSLLNSCR…EAGCSWVQVK (76 aa). Residues 584 to 615 are type E(+) motif; that stretch reads DKIQIFVAGGGYEFRNSDEYKKVWTELQEAIE. A type DYW motif region spans residues 616–710; sequence KSGYSPNTSV…DGICSCKDYW (95 aa).

Belongs to the PPR family. PCMP-H subfamily.

The polypeptide is Pentatricopeptide repeat-containing protein At3g14330 (PCMP-H57) (Arabidopsis thaliana (Mouse-ear cress)).